Reading from the N-terminus, the 417-residue chain is MFSKQDQIQGYDDALLSAMNAEEQRQEDHIELIASENYTSKRVMQAQGSGLTNKYAEGYPGKRYYGGCEHVDKVEQLAIERARQLFGADYANVQPHSGSQANAAVYLALLQAGDTVLGMSLAHGGHLTHGAKVSFSGKLYNAVQYGIDTATGLIDYDEVERIAVECQPKMIIAGFSAYSKTLDFPRFRAIADKVGAYLFVDMAHVAGLVAAGLYPNPLPYADVVTTTTHKTLRGPRGGLILARANEELEKKFNSAVFPGGQGGPLMHVIAAKAVCFKEAMEPGFKAYQQQVIDNAQAMAQVFIDRGFDVVSGGTDNHLFLVSLIRQGLTGKDADAALGRAHITVNKNSVPNDPQSPFVTSGLRIGTPAVTTRGFKVTQCVELAGWICDILDNLGDADVEADVASQVAALCADFPVYR.

Residues Leu121 and Gly125–Leu127 contribute to the (6S)-5,6,7,8-tetrahydrofolate site. Lys230 carries the N6-(pyridoxal phosphate)lysine modification. Ser355–Phe357 provides a ligand contact to (6S)-5,6,7,8-tetrahydrofolate.

This sequence belongs to the SHMT family. As to quaternary structure, homodimer. It depends on pyridoxal 5'-phosphate as a cofactor.

The protein localises to the cytoplasm. The catalysed reaction is (6R)-5,10-methylene-5,6,7,8-tetrahydrofolate + glycine + H2O = (6S)-5,6,7,8-tetrahydrofolate + L-serine. It functions in the pathway one-carbon metabolism; tetrahydrofolate interconversion. It participates in amino-acid biosynthesis; glycine biosynthesis; glycine from L-serine: step 1/1. Its function is as follows. Catalyzes the reversible interconversion of serine and glycine with tetrahydrofolate (THF) serving as the one-carbon carrier. This reaction serves as the major source of one-carbon groups required for the biosynthesis of purines, thymidylate, methionine, and other important biomolecules. Also exhibits THF-independent aldolase activity toward beta-hydroxyamino acids, producing glycine and aldehydes, via a retro-aldol mechanism. The polypeptide is Serine hydroxymethyltransferase 2 (Pseudomonas syringae pv. syringae (strain B728a)).